Consider the following 866-residue polypeptide: Probable beta-glucosidase F (866 aa).

A signal peptide spans 1–20 (MAAFPAYLALLSYLVPGALS). N-linked (GlcNAc...) asparagine glycans are attached at residues asparagine 65, asparagine 73, and asparagine 257. Aspartate 285 is a catalytic residue. 8 N-linked (GlcNAc...) asparagine glycosylation sites follow: asparagine 328, asparagine 360, asparagine 395, asparagine 421, asparagine 474, asparagine 659, asparagine 664, and asparagine 724. Residues 725–748 (SSKTYPYPDGYTTEPKPAPRAGGA) form a disordered region.

This sequence belongs to the glycosyl hydrolase 3 family.

The protein resides in the secreted. It carries out the reaction Hydrolysis of terminal, non-reducing beta-D-glucosyl residues with release of beta-D-glucose.. It functions in the pathway glycan metabolism; cellulose degradation. Functionally, beta-glucosidases are one of a number of cellulolytic enzymes involved in the degradation of cellulosic biomass. Catalyzes the last step releasing glucose from the inhibitory cellobiose. In Aspergillus flavus (strain ATCC 200026 / FGSC A1120 / IAM 13836 / NRRL 3357 / JCM 12722 / SRRC 167), this protein is Probable beta-glucosidase F (bglF).